Consider the following 725-residue polypeptide: Rab-like protein 6 (725 aa).

N-acetylmethionine is present on Met1. A small GTPase-like region spans residues Gly39 to Ser279. Residues Gly50 to Thr57, Asp100 to Lys104, and Tyr177 to Asp179 contribute to the GTP site. 2 disordered regions span residues Gly281–Ala364 and Pro378–Leu725. 2 stretches are compositionally biased toward low complexity: residues Gln291–Leu325 and Ala343–Pro353. Residues Gly410–Val427 are compositionally biased toward basic and acidic residues. 7 positions are modified to phosphoserine: Ser414, Ser436, Ser438, Ser480, Ser482, Ser483, and Ser502. A compositionally biased stretch (polar residues) spans Gln499–Ser514. Residues Asp537 to Val549 are compositionally biased toward basic and acidic residues. Residues Asp569 to Ser578 are compositionally biased toward acidic residues. Ser575 and Ser594 each carry phosphoserine. Thr597 is subject to Phosphothreonine. A compositionally biased stretch (basic and acidic residues) spans Met632–Lys649. Phosphoserine is present on residues Ser637, Ser638, and Ser644. An interaction with CDKN2A region spans residues Lys652–Lys690. Basic residues predominate over residues Thr666–Ser675. Gly residues predominate over residues Leu707 to Leu725.

It belongs to the small GTPase superfamily. Rab family.

The protein localises to the nucleus. It localises to the cytoplasm. Its function is as follows. May enhance cellular proliferation. May reduce growth inhibitory activity of CDKN2A. The polypeptide is Rab-like protein 6 (Rabl6) (Mus musculus (Mouse)).